The following is a 354-amino-acid chain: S-adenosylmethionine:tRNA ribosyltransferase-isomerase (354 aa).

Belongs to the QueA family. Monomer.

Its subcellular location is the cytoplasm. It catalyses the reaction 7-aminomethyl-7-carbaguanosine(34) in tRNA + S-adenosyl-L-methionine = epoxyqueuosine(34) in tRNA + adenine + L-methionine + 2 H(+). It functions in the pathway tRNA modification; tRNA-queuosine biosynthesis. Its function is as follows. Transfers and isomerizes the ribose moiety from AdoMet to the 7-aminomethyl group of 7-deazaguanine (preQ1-tRNA) to give epoxyqueuosine (oQ-tRNA). This is S-adenosylmethionine:tRNA ribosyltransferase-isomerase from Methylobacterium radiotolerans (strain ATCC 27329 / DSM 1819 / JCM 2831 / NBRC 15690 / NCIMB 10815 / 0-1).